The primary structure comprises 807 residues: DNA gyrase subunit B (807 aa).

A Toprim domain is found at 429 to 543; sequence SELFIVEGDS…KGYLYIAQPP (115 aa). Residues E435, D508, and D510 each contribute to the Mg(2+) site.

This sequence belongs to the type II topoisomerase GyrB family. As to quaternary structure, heterotetramer, composed of two GyrA and two GyrB chains. In the heterotetramer, GyrA contains the active site tyrosine that forms a transient covalent intermediate with DNA, while GyrB binds cofactors and catalyzes ATP hydrolysis. Requires Mg(2+) as cofactor. It depends on Mn(2+) as a cofactor. Ca(2+) serves as cofactor.

The protein resides in the cytoplasm. The catalysed reaction is ATP-dependent breakage, passage and rejoining of double-stranded DNA.. In terms of biological role, a type II topoisomerase that negatively supercoils closed circular double-stranded (ds) DNA in an ATP-dependent manner to modulate DNA topology and maintain chromosomes in an underwound state. Negative supercoiling favors strand separation, and DNA replication, transcription, recombination and repair, all of which involve strand separation. Also able to catalyze the interconversion of other topological isomers of dsDNA rings, including catenanes and knotted rings. Type II topoisomerases break and join 2 DNA strands simultaneously in an ATP-dependent manner. This chain is DNA gyrase subunit B, found in Rickettsia prowazekii (strain Madrid E).